Here is a 156-residue protein sequence, read N- to C-terminus: SsrA-binding protein (156 aa).

Residues 130–156 (KFDKRDDLKKKDAKRDIDRALRDKQKY) are disordered. Over residues 132 to 156 (DKRDDLKKKDAKRDIDRALRDKQKY) the composition is skewed to basic and acidic residues.

It belongs to the SmpB family.

The protein resides in the cytoplasm. Its function is as follows. Required for rescue of stalled ribosomes mediated by trans-translation. Binds to transfer-messenger RNA (tmRNA), required for stable association of tmRNA with ribosomes. tmRNA and SmpB together mimic tRNA shape, replacing the anticodon stem-loop with SmpB. tmRNA is encoded by the ssrA gene; the 2 termini fold to resemble tRNA(Ala) and it encodes a 'tag peptide', a short internal open reading frame. During trans-translation Ala-aminoacylated tmRNA acts like a tRNA, entering the A-site of stalled ribosomes, displacing the stalled mRNA. The ribosome then switches to translate the ORF on the tmRNA; the nascent peptide is terminated with the 'tag peptide' encoded by the tmRNA and targeted for degradation. The ribosome is freed to recommence translation, which seems to be the essential function of trans-translation. The sequence is that of SsrA-binding protein from Exiguobacterium sibiricum (strain DSM 17290 / CCUG 55495 / CIP 109462 / JCM 13490 / 255-15).